A 351-amino-acid chain; its full sequence is Dihydroorotate dehydrogenase (quinone) (351 aa).

FMN-binding positions include 61-65 (AGLDK) and T85. Substrate is bound at residue K65. A substrate-binding site is contributed by 110 to 114 (NRMGF). 2 residues coordinate FMN: N139 and N172. Position 172 (N172) interacts with substrate. The Nucleophile role is filled by S175. N177 contacts substrate. The FMN site is built by K217 and T245. A substrate-binding site is contributed by 246-247 (NT). Residues G268, G297, and 318-319 (YS) contribute to the FMN site.

The protein belongs to the dihydroorotate dehydrogenase family. Type 2 subfamily. In terms of assembly, monomer. Requires FMN as cofactor.

It is found in the cell membrane. The enzyme catalyses (S)-dihydroorotate + a quinone = orotate + a quinol. Its pathway is pyrimidine metabolism; UMP biosynthesis via de novo pathway; orotate from (S)-dihydroorotate (quinone route): step 1/1. In terms of biological role, catalyzes the conversion of dihydroorotate to orotate with quinone as electron acceptor. This chain is Dihydroorotate dehydrogenase (quinone), found in Xanthomonas euvesicatoria pv. vesicatoria (strain 85-10) (Xanthomonas campestris pv. vesicatoria).